The following is a 463-amino-acid chain: Kynureninase 2 (463 aa).

Residues Leu-134, Thr-135, 162–165 (FPSD), Asp-247, His-250, and Tyr-272 each bind pyridoxal 5'-phosphate. Lys-273 is modified (N6-(pyridoxal phosphate)lysine). Residues Trp-312 and Asn-340 each contribute to the pyridoxal 5'-phosphate site.

It belongs to the kynureninase family. Homodimer. Requires pyridoxal 5'-phosphate as cofactor.

The protein resides in the cytoplasm. It catalyses the reaction L-kynurenine + H2O = anthranilate + L-alanine + H(+). It carries out the reaction 3-hydroxy-L-kynurenine + H2O = 3-hydroxyanthranilate + L-alanine + H(+). It functions in the pathway amino-acid degradation; L-kynurenine degradation; L-alanine and anthranilate from L-kynurenine: step 1/1. Its pathway is cofactor biosynthesis; NAD(+) biosynthesis; quinolinate from L-kynurenine: step 2/3. In terms of biological role, catalyzes the cleavage of L-kynurenine (L-Kyn) and L-3-hydroxykynurenine (L-3OHKyn) into anthranilic acid (AA) and 3-hydroxyanthranilic acid (3-OHAA), respectively. This is Kynureninase 2 (bna5-2) from Aspergillus terreus (strain NIH 2624 / FGSC A1156).